A 488-amino-acid polypeptide reads, in one-letter code: GlcNAc-binding protein A (488 aa).

The first 24 residues, 1 to 24 (MIMIITKKTLLPVTLALFSSGVMA), serve as a signal peptide directing secretion. Residues 25–202 (HGYVSSVEGG…SFYNVIDVMF (178 aa)) form the Chitin-binding type-4 domain. Residues 439-480 (AGSKVLATDGRIYECKPFPYSGYCIQWSPSATQFEPGVGSDW) form the Chitin-binding type-3 domain.

The protein belongs to the GbpA family.

The protein resides in the secreted. In terms of biological role, probably interacts with GlcNAc residues. May promote attachment to both epithelial cell surfaces and chitin. This Photobacterium profundum (strain SS9) protein is GlcNAc-binding protein A.